The sequence spans 499 residues: Transcriptional regulator sdnM (499 aa).

Its subcellular location is the nucleus. It participates in antibiotic biosynthesis. Transcriptional regulator; part of the gene cluster that mediates the biosynthesis of sordarin and hypoxysordarin, glycoside antibiotics with a unique tetracyclic diterpene aglycone structure. First, the geranylgeranyl diphosphate synthase sdnC constructs GGDP from farnesyl diphosphate and isopentenyl diphosphate. The diterpene cyclase sdnA then catalyzes the cyclization of GGDP to afford cycloaraneosene. Cycloaraneosene is then hydroxylated four times by the putative cytochrome P450 monooxygenases sdnB, sdnE, sdnF and sdnH to give a hydroxylated cycloaraneosene derivative such as cycloaraneosene-8,9,13,19-tetraol. Although the order of the hydroxylations is unclear, at least C8, C9 and C13 of the cycloaraneosene skeleton are hydroxylated before the sordaricin formation. Dehydration of the 13-hydroxy group of the hydroxylated cycloaraneosene derivative might be catalyzed by an unassigned hypothetical protein such as sdnG and sdnP to construct the cyclopentadiene moiety. The FAD-dependent oxidoreductase sdnN is proposed to catalyze the oxidation at C9 of the hydroxylated cycloaraneosene derivative and also catalyze the Baeyer-Villiger oxidation to give the lactone intermediate. The presumed lactone intermediate would be hydrolyzed to give an acrolein moiety and a carboxylate moiety. Then, [4+2]cycloaddition would occur between the acrolein moiety and the cyclopentadiene moiety to give sordaricin. SdnN might also be involved in the [4+2]cycloaddition after the hypothesized oxidation to accommodate the oxidized product and prompt the [4+2]cycloaddition. GDP-6-deoxy-D-altrose may be biosynthesized from GDP-D-mannose by the putative GDP-mannose-4,6-dehydratase sdnI and the short-chain dehydrogenase sdnK. The glycosyltransferase sdnJ catalyzes the attachment of 6-deoxy-D-altrose onto the 19-hydroxy group of sordaricin to give 4'-O-demethylsordarin. The methyltransferase sdnD would complete the biosynthesis of sordarin. Sordarin can be further modified into hypoxysordarin. The unique acyl chain at the 3'-hydroxy group of hypoxysordarin would be constructed by an iterative type I PKS sdnO and the trans-acting polyketide methyltransferase sdnL. SdnL would be responsible for the introduction of an alpha-methyl group of the polyketide chain. Alternatively, the beta-lactamase-like protein sdnR might be responsible for the cleavage and transfer of the polyketide chain from the PKS sdnO to sordarin. Two putative cytochrome P450 monooxygenases, sdnQ and sdnT, might catalyze the epoxidations of the polyketide chain to complete the biosynthesis of hypoxysordarin. Transcriptional regulators sdnM and sdnS are presumably encoded for the transcriptional regulation of the expression of the sdn gene cluster. The sequence is that of Transcriptional regulator sdnM from Sordaria araneosa (Pleurage araneosa).